We begin with the raw amino-acid sequence, 295 residues long: tRNA pseudouridine synthase B (295 aa).

Asp42 serves as the catalytic Nucleophile.

This sequence belongs to the pseudouridine synthase TruB family. Type 1 subfamily.

It carries out the reaction uridine(55) in tRNA = pseudouridine(55) in tRNA. In terms of biological role, responsible for synthesis of pseudouridine from uracil-55 in the psi GC loop of transfer RNAs. The polypeptide is tRNA pseudouridine synthase B (Cutibacterium acnes (strain DSM 16379 / KPA171202) (Propionibacterium acnes)).